We begin with the raw amino-acid sequence, 170 residues long: Putative 4-hydroxy-4-methyl-2-oxoglutarate aldolase (170 aa).

Substrate contacts are provided by residues 81–84 and Arg-103; that span reads GDII. An a divalent metal cation-binding site is contributed by Asp-104.

It belongs to the class II aldolase/RraA-like family. In terms of assembly, homotrimer. It depends on a divalent metal cation as a cofactor.

The catalysed reaction is 4-hydroxy-4-methyl-2-oxoglutarate = 2 pyruvate. The enzyme catalyses oxaloacetate + H(+) = pyruvate + CO2. In terms of biological role, catalyzes the aldol cleavage of 4-hydroxy-4-methyl-2-oxoglutarate (HMG) into 2 molecules of pyruvate. Also contains a secondary oxaloacetate (OAA) decarboxylase activity due to the common pyruvate enolate transition state formed following C-C bond cleavage in the retro-aldol and decarboxylation reactions. This is Putative 4-hydroxy-4-methyl-2-oxoglutarate aldolase from Corynebacterium efficiens (strain DSM 44549 / YS-314 / AJ 12310 / JCM 11189 / NBRC 100395).